The sequence spans 304 residues: Putative integrase/recombinase HI_1414 (304 aa).

The region spanning 30–109 is the Core-binding (CB) domain; the sequence is TLFSDVIKRY…TIGHIFKIAL (80 aa). A Tyr recombinase domain is found at 131–304; sequence PRTQRVTEEN…DMAEVAELLD (174 aa). Active-site residues include R174, K199, H256, R259, and H281. Catalysis depends on Y291, which acts as the O-(3'-phospho-DNA)-tyrosine intermediate.

Belongs to the 'phage' integrase family.

In Haemophilus influenzae (strain ATCC 51907 / DSM 11121 / KW20 / Rd), this protein is Putative integrase/recombinase HI_1414.